Consider the following 241-residue polypeptide: Small ribosomal subunit protein uS2 (241 aa).

Belongs to the universal ribosomal protein uS2 family.

The chain is Small ribosomal subunit protein uS2 from Klebsiella pneumoniae subsp. pneumoniae (strain ATCC 700721 / MGH 78578).